Consider the following 290-residue polypeptide: Sodium/potassium-transporting ATPase subunit beta-2 (290 aa).

At 1 to 39 (MVIQKEKKSCGQVVEEWKEFVWNPRTHQFMGRTGTSWAF) the chain is on the cytoplasmic side. Residues 40 to 67 (ILLFYLVFYGFLTAMFTLTMWVMLQTVS) form a helical; Signal-anchor for type II membrane protein membrane-spanning segment. Residues 68–290 (DHTPKYQDRL…VAFKLRINKT (223 aa)) are Extracellular-facing. Asparagine 96 and asparagine 118 each carry an N-linked (GlcNAc...) asparagine glycan. A disulfide bridge connects residues cysteine 129 and cysteine 150. N-linked (GlcNAc...) asparagine glycosylation is present at asparagine 153. A disulfide bridge links cysteine 160 with cysteine 177. Asparagine 193, asparagine 197, and asparagine 238 each carry an N-linked (GlcNAc...) asparagine glycan. Positions 193-289 (NQSMNVTCVG…RVAFKLRINK (97 aa)) are immunoglobulin-like. A disulfide bond links cysteine 200 and cysteine 261.

The protein belongs to the X(+)/potassium ATPases subunit beta family. In terms of assembly, the sodium/potassium-transporting ATPase is composed of a catalytic alpha subunit, an auxiliary non-catalytic beta subunit and an additional regulatory subunit. Interacts with BSG.

It localises to the cell membrane. Functionally, this is the non-catalytic component of the active enzyme, which catalyzes the hydrolysis of ATP coupled with the exchange of Na(+) and K(+) ions across the plasma membrane. The exact function of the beta-2 subunit is not known. Its function is as follows. Mediates cell adhesion of neurons and astrocytes, and promotes neurite outgrowth. In Bos taurus (Bovine), this protein is Sodium/potassium-transporting ATPase subunit beta-2 (ATP1B2).